The following is a 503-amino-acid chain: Potassium voltage-gated channel subfamily V member 1 (503 aa).

The Cytoplasmic portion of the chain corresponds to 1–213; the sequence is MELLPPRGRA…EKPGSCTAAR (213 aa). The helical transmembrane segment at 214-234 threads the bilayer; the sequence is IFGVISIIFVAVSIVNMALMS. The Extracellular portion of the chain corresponds to 235–246; that stretch reads AELSWLDPQLLE. A helical transmembrane segment spans residues 247–267; sequence ILEYVCISWFTGEFVLRFLCV. The Cytoplasmic portion of the chain corresponds to 268-279; it reads RDRCRFLRKVPN. The chain crosses the membrane as a helical span at residues 280-300; the sequence is IIDLLAILPFYITLLVESLSG. At 301 to 312 the chain is on the extracellular side; it reads SQTTQELENVGR. A helical; Voltage-sensor membrane pass occupies residues 313-334; it reads IVQVLRLLRALRMLKLGRHSTG. Residues 335–348 lie on the Cytoplasmic side of the membrane; sequence LRSLGMTITQCYEE. Residues 349 to 369 form a helical membrane-spanning segment; sequence VGLLLLFLSVGISIFSTVEYF. The short motif at 395-400 is the Selectivity filter element; it reads TVGYGD. A helical membrane pass occupies residues 410-430; it reads IVAFMCILSGILVLALPIAII. Residues 431-503 lie on the Cytoplasmic side of the membrane; that stretch reads NDRFSACYFT…RSSGGDDFWF (73 aa).

It belongs to the potassium channel family. V (TC 1.A.1.2) subfamily. Kv8.1/KCNV1 sub-subfamily. Heteromultimer with KCNB1 and KCNB2. Interacts with KCNC4 and KCND1.

Its subcellular location is the cell membrane. Its function is as follows. Potassium channel subunit that does not form functional channels by itself. Modulates KCNB1 and KCNB2 channel activity by shifting the threshold for inactivation to more negative values and by slowing the rate of inactivation. Can down-regulate the channel activity of KCNB1, KCNB2, KCNC4 and KCND1, possibly by trapping them in intracellular membranes. The polypeptide is Potassium voltage-gated channel subfamily V member 1 (KCNV1) (Bos taurus (Bovine)).